Reading from the N-terminus, the 746-residue chain is 1,4-alpha-glucan branching enzyme GlgB (746 aa).

D418 serves as the catalytic Nucleophile. Residue E471 is the Proton donor of the active site.

The protein belongs to the glycosyl hydrolase 13 family. GlgB subfamily. As to quaternary structure, monomer.

The enzyme catalyses Transfers a segment of a (1-&gt;4)-alpha-D-glucan chain to a primary hydroxy group in a similar glucan chain.. Its pathway is glycan biosynthesis; glycogen biosynthesis. In terms of biological role, catalyzes the formation of the alpha-1,6-glucosidic linkages in glycogen by scission of a 1,4-alpha-linked oligosaccharide from growing alpha-1,4-glucan chains and the subsequent attachment of the oligosaccharide to the alpha-1,6 position. The sequence is that of 1,4-alpha-glucan branching enzyme GlgB from Nitrosospira multiformis (strain ATCC 25196 / NCIMB 11849 / C 71).